The primary structure comprises 940 residues: Alanine--tRNA ligase (940 aa).

The Zn(2+) site is built by His581, His585, Cys683, and His687.

Belongs to the class-II aminoacyl-tRNA synthetase family. It depends on Zn(2+) as a cofactor.

It is found in the cytoplasm. It carries out the reaction tRNA(Ala) + L-alanine + ATP = L-alanyl-tRNA(Ala) + AMP + diphosphate. Catalyzes the attachment of alanine to tRNA(Ala) in a two-step reaction: alanine is first activated by ATP to form Ala-AMP and then transferred to the acceptor end of tRNA(Ala). Also edits incorrectly charged Ser-tRNA(Ala) and Gly-tRNA(Ala) via its editing domain. This is Alanine--tRNA ligase from Leptospira borgpetersenii serovar Hardjo-bovis (strain L550).